A 237-amino-acid chain; its full sequence is Adenosine 5'-phosphosulfate reductase (237 aa).

4 residues coordinate [4Fe-4S] cluster: Cys-123, Cys-124, Cys-206, and Cys-209. Cys-232 serves as the catalytic Nucleophile; cysteine thiosulfonate intermediate.

The protein belongs to the PAPS reductase family. CysH subfamily. [4Fe-4S] cluster is required as a cofactor.

It localises to the cytoplasm. It carries out the reaction [thioredoxin]-disulfide + sulfite + AMP + 2 H(+) = adenosine 5'-phosphosulfate + [thioredoxin]-dithiol. The protein operates within sulfur metabolism; hydrogen sulfide biosynthesis; sulfite from sulfate. Catalyzes the formation of sulfite from adenosine 5'-phosphosulfate (APS) using thioredoxin as an electron donor. This is Adenosine 5'-phosphosulfate reductase from Mycobacteroides abscessus (strain ATCC 19977 / DSM 44196 / CCUG 20993 / CIP 104536 / JCM 13569 / NCTC 13031 / TMC 1543 / L948) (Mycobacterium abscessus).